A 264-amino-acid chain; its full sequence is Thymidylate synthase (264 aa).

Arginine 21 lines the dUMP pocket. Histidine 51 contributes to the (6R)-5,10-methylene-5,6,7,8-tetrahydrofolate binding site. Arginine 126–arginine 127 is a binding site for dUMP. The active-site Nucleophile is cysteine 146. DUMP contacts are provided by residues arginine 166–aspartate 169, asparagine 177, and histidine 207–tyrosine 209. (6R)-5,10-methylene-5,6,7,8-tetrahydrofolate is bound at residue aspartate 169. Serine 263 contributes to the (6R)-5,10-methylene-5,6,7,8-tetrahydrofolate binding site.

It belongs to the thymidylate synthase family. Bacterial-type ThyA subfamily. Homodimer.

It localises to the cytoplasm. The catalysed reaction is dUMP + (6R)-5,10-methylene-5,6,7,8-tetrahydrofolate = 7,8-dihydrofolate + dTMP. It functions in the pathway pyrimidine metabolism; dTTP biosynthesis. Catalyzes the reductive methylation of 2'-deoxyuridine-5'-monophosphate (dUMP) to 2'-deoxythymidine-5'-monophosphate (dTMP) while utilizing 5,10-methylenetetrahydrofolate (mTHF) as the methyl donor and reductant in the reaction, yielding dihydrofolate (DHF) as a by-product. This enzymatic reaction provides an intracellular de novo source of dTMP, an essential precursor for DNA biosynthesis. This chain is Thymidylate synthase, found in Neisseria meningitidis serogroup C / serotype 2a (strain ATCC 700532 / DSM 15464 / FAM18).